A 119-amino-acid chain; its full sequence is Large ribosomal subunit protein uL18 (119 aa).

Residues 1-25 (MITKIDKNKVRKKRHARVRSKISGT) form a disordered region. Residues 9–20 (KVRKKRHARVRS) are compositionally biased toward basic residues.

The protein belongs to the universal ribosomal protein uL18 family. As to quaternary structure, part of the 50S ribosomal subunit; part of the 5S rRNA/L5/L18/L25 subcomplex. Contacts the 5S and 23S rRNAs.

In terms of biological role, this is one of the proteins that bind and probably mediate the attachment of the 5S RNA into the large ribosomal subunit, where it forms part of the central protuberance. This is Large ribosomal subunit protein uL18 from Listeria innocua serovar 6a (strain ATCC BAA-680 / CLIP 11262).